The following is a 511-amino-acid chain: Probable G-protein coupled receptor 152 (511 aa).

Residues 1–20 are disordered; sequence MDTAVEANLGAAGHGPRTEL. The Extracellular segment spans residues 1–33; that stretch reads MDTAVEANLGAAGHGPRTELSDEDYYPQGSWDT. A helical transmembrane segment spans residues 34 to 54; it reads VFLVALLLLGLPANGLMAWLA. The Cytoplasmic portion of the chain corresponds to 55 to 65; sequence GSQARHGAGTR. Residues 66–86 traverse the membrane as a helical segment; that stretch reads LALLLLSLALSDFLFLAAATF. At 87–105 the chain is on the extracellular side; that stretch reads QILEIQHGGHWPLGTAACR. A disulfide bond links Cys104 and Cys182. Residues 106–126 form a helical membrane-spanning segment; that stretch reads FYYFLWGVSYSSGLFLLTALS. Residues 127–148 are Cytoplasmic-facing; that stretch reads LDRCLLALCPRWYPGHRPARLP. A helical membrane pass occupies residues 149-169; that stretch reads LWVCAGVWVLATLFSVPWLVF. The Extracellular portion of the chain corresponds to 170-194; it reads PEAAVWWYDLVICLDFWDTEELPLR. A helical transmembrane segment spans residues 195–215; that stretch reads MLEILGGFLPFLLLLVCHVLT. Residues 216–258 lie on the Cytoplasmic side of the membrane; sequence QATACRTCCGHQPRRMACHGFARVAKTILSAYVVLRLPYQLAQ. A helical membrane pass occupies residues 259–279; that stretch reads LLYLAFLWDVYPGYLLWEALV. Topologically, residues 280–282 are extracellular; that stretch reads YSD. Residues 283–303 form a helical membrane-spanning segment; sequence YLILLNSCLSPFLCLAASADL. Over 304 to 511 the chain is Cytoplasmic; the sequence is RALLRTVLSS…PEEAPSAGPT (208 aa). Disordered regions lie at residues 328–349, 361–386, and 407–511; these read PAEP…DSVV, SDSV…PTVG, and PQLD…AGPT. 2 stretches are compositionally biased toward polar residues: residues 335 to 345 and 369 to 386; these read PGPTSEGQSRL and VSPS…PTVG. Positions 419–433 are enriched in low complexity; the sequence is PSAQPQSKSVVQPQV. 2 stretches are compositionally biased toward polar residues: residues 435–453 and 462–473; these read PLTQ…NTET and SASNPGEENSSG.

The protein belongs to the G-protein coupled receptor 1 family.

It localises to the cell membrane. Its function is as follows. Orphan receptor. The chain is Probable G-protein coupled receptor 152 (Gpr152) from Mus musculus (Mouse).